The sequence spans 263 residues: Acyl-[acyl-carrier-protein]--UDP-N-acetylglucosamine O-acyltransferase (263 aa).

The protein belongs to the transferase hexapeptide repeat family. LpxA subfamily. Homotrimer.

It is found in the cytoplasm. It catalyses the reaction a (3R)-hydroxyacyl-[ACP] + UDP-N-acetyl-alpha-D-glucosamine = a UDP-3-O-[(3R)-3-hydroxyacyl]-N-acetyl-alpha-D-glucosamine + holo-[ACP]. It functions in the pathway glycolipid biosynthesis; lipid IV(A) biosynthesis; lipid IV(A) from (3R)-3-hydroxytetradecanoyl-[acyl-carrier-protein] and UDP-N-acetyl-alpha-D-glucosamine: step 1/6. In terms of biological role, involved in the biosynthesis of lipid A, a phosphorylated glycolipid that anchors the lipopolysaccharide to the outer membrane of the cell. This chain is Acyl-[acyl-carrier-protein]--UDP-N-acetylglucosamine O-acyltransferase, found in Caulobacter vibrioides (strain ATCC 19089 / CIP 103742 / CB 15) (Caulobacter crescentus).